The following is a 274-amino-acid chain: NADPH-dependent 7-cyano-7-deazaguanine reductase (274 aa).

80–82 provides a ligand contact to substrate; sequence VES. Position 82 to 83 (82 to 83) interacts with NADPH; it reads SK. The active-site Thioimide intermediate is Cys181. Asp188 acts as the Proton donor in catalysis. 220-221 provides a ligand contact to substrate; sequence HE. An NADPH-binding site is contributed by 249-250; the sequence is RG.

It belongs to the GTP cyclohydrolase I family. QueF type 2 subfamily. In terms of assembly, homodimer.

It localises to the cytoplasm. It catalyses the reaction 7-aminomethyl-7-carbaguanine + 2 NADP(+) = 7-cyano-7-deazaguanine + 2 NADPH + 3 H(+). It participates in tRNA modification; tRNA-queuosine biosynthesis. Its function is as follows. Catalyzes the NADPH-dependent reduction of 7-cyano-7-deazaguanine (preQ0) to 7-aminomethyl-7-deazaguanine (preQ1). This chain is NADPH-dependent 7-cyano-7-deazaguanine reductase, found in Burkholderia thailandensis (strain ATCC 700388 / DSM 13276 / CCUG 48851 / CIP 106301 / E264).